The chain runs to 321 residues: Tetraacyldisaccharide 4'-kinase (321 aa).

54-61 contacts ATP; the sequence is SVGGTGKT.

This sequence belongs to the LpxK family.

It carries out the reaction a lipid A disaccharide + ATP = a lipid IVA + ADP + H(+). It functions in the pathway glycolipid biosynthesis; lipid IV(A) biosynthesis; lipid IV(A) from (3R)-3-hydroxytetradecanoyl-[acyl-carrier-protein] and UDP-N-acetyl-alpha-D-glucosamine: step 6/6. Its function is as follows. Transfers the gamma-phosphate of ATP to the 4'-position of a tetraacyldisaccharide 1-phosphate intermediate (termed DS-1-P) to form tetraacyldisaccharide 1,4'-bis-phosphate (lipid IVA). This is Tetraacyldisaccharide 4'-kinase from Rickettsia rickettsii.